Here is a 372-residue protein sequence, read N- to C-terminus: Flap endonuclease 1 (372 aa).

Residues 1–105 (MGVKGLNQLI…GELEKRLLRR (105 aa)) are N-domain. Mg(2+) is bound at residue aspartate 34. Residues arginine 47 and arginine 71 each coordinate DNA. Aspartate 87, glutamate 159, glutamate 161, aspartate 180, and aspartate 182 together coordinate Mg(2+). The tract at residues 123–254 (EVLKFEKRLV…ATAFKLIKEH (132 aa)) is I-domain. Position 159 (glutamate 159) interacts with DNA. Positions 232 and 234 each coordinate DNA. A Mg(2+)-binding site is contributed by aspartate 234. The interval 339 to 347 (VQGRLDGFF) is interaction with PCNA.

This sequence belongs to the XPG/RAD2 endonuclease family. FEN1 subfamily. Interacts with PCNA. Three molecules of RAD27 bind to one PCNA trimer with each molecule binding to one PCNA monomer. PCNA stimulates the nuclease activity without altering cleavage specificity. It depends on Mg(2+) as a cofactor. In terms of processing, phosphorylated. Phosphorylation upon DNA damage induces relocalization to the nuclear plasma.

It localises to the nucleus. It is found in the nucleolus. The protein resides in the nucleoplasm. Its subcellular location is the mitochondrion. Structure-specific nuclease with 5'-flap endonuclease and 5'-3' exonuclease activities involved in DNA replication and repair. During DNA replication, cleaves the 5'-overhanging flap structure that is generated by displacement synthesis when DNA polymerase encounters the 5'-end of a downstream Okazaki fragment. It enters the flap from the 5'-end and then tracks to cleave the flap base, leaving a nick for ligation. Also involved in the long patch base excision repair (LP-BER) pathway, by cleaving within the apurinic/apyrimidinic (AP) site-terminated flap. Acts as a genome stabilization factor that prevents flaps from equilibrating into structures that lead to duplications and deletions. Also possesses 5'-3' exonuclease activity on nicked or gapped double-stranded DNA, and exhibits RNase H activity. Also involved in replication and repair of rDNA and in repairing mitochondrial DNA. This is Flap endonuclease 1 from Candida dubliniensis (strain CD36 / ATCC MYA-646 / CBS 7987 / NCPF 3949 / NRRL Y-17841) (Yeast).